A 973-amino-acid polypeptide reads, in one-letter code: Peptidyl-glycine alpha-amidating monooxygenase (973 aa).

The signal sequence occupies residues 1–20; that stretch reads MAGRVPSLLVLLVFPSSCLA. The tract at residues 1 to 494 is peptidylglycine alpha-hydroxylating monooxygenase; the sequence is MAGRVPSLLV…EGTWEPEHTG (494 aa). A propeptide spanning residues 21 to 30 is cleaved from the precursor; the sequence is FRSPLSVFKR. The Intragranular segment spans residues 31 to 863; it reads FKETTRPFSN…QKLIKEPGSG (833 aa). Disulfide bonds link Cys42-Cys181, Cys76-Cys121, Cys109-Cys126, Cys222-Cys329, and Cys288-Cys310. Positions 102 and 103 each coordinate Cu(2+). Positions 167, 237, 239, and 309 each coordinate Cu(2+). The tract at residues 495–817 is peptidyl-alpha-hydroxyglycine alpha-amidating lyase; it reads DFHMEEALDW…LTEKLEHRSV (323 aa). NHL repeat units follow at residues 498-541, 567-608, 617-662, and 670-714; these read MEEA…NSFD, AAVL…LDPN, LGRS…FSPS, and GEES…FKTD. Val517 contributes to the Ca(2+) binding site. Arg530 contacts a protein. A Zn(2+)-binding site is contributed by His582. Leu584 contributes to the Ca(2+) binding site. An intrachain disulfide couples Cys631 to Cys652. Tyr651 is a binding site for a protein. A Zn(2+)-binding site is contributed by His687. Cysteines 699 and 710 form a disulfide. Arg703 contributes to the a protein binding site. Asn762 is a glycosylation site (N-linked (GlcNAc...) asparagine). The NHL 5 repeat unit spans residues 766 to 809; that stretch reads GEIIDIFKPVRKHFDMPHDIVASEDGTVYIGDAHTNTVWKFTLT. Residue His783 participates in Zn(2+) binding. Asp784 is a Ca(2+) binding site. The helical transmembrane segment at 864–887 threads the bilayer; that stretch reads VPVVLITTLLVIPVVVLLAIAIFI. Residues Ile875 and Arg893 each carry the sulfotyrosine modification. Over 888–973 the chain is Cytoplasmic; that stretch reads RWKKSRAFGD…PLPALAPSSS (86 aa). Residues Ser918, Ser929, and Ser942 each carry the phosphoserine modification. The segment at 925-942 is interaction with RASSF9; that stretch reads NFFASRKGYSRKGFDRLS. The segment at 937-973 is disordered; that stretch reads GFDRLSTEGSDQEKEDDGSESEEEYSAPLPALAPSSS. Position 943 is a phosphothreonine (Thr943). The residue at position 946 (Ser946) is a Phosphoserine; by UHMK1; in vitro. Over residues 949-961 the composition is skewed to acidic residues; it reads EKEDDGSESEEEY. Ser957 is modified (phosphoserine). Residues 962-973 show a composition bias toward low complexity; sequence SAPLPALAPSSS.

This sequence in the C-terminal section; belongs to the peptidyl-alpha-hydroxyglycine alpha-amidating lyase family. It in the N-terminal section; belongs to the copper type II ascorbate-dependent monooxygenase family. In terms of assembly, monomer. Interacts with RASSF9. It depends on Zn(2+) as a cofactor. The cofactor is Cu(2+).

The protein resides in the cytoplasmic vesicle. Its subcellular location is the secretory vesicle membrane. It is found in the membrane. It localises to the secreted. The catalysed reaction is a [peptide]-C-terminal glycine + 2 L-ascorbate + O2 = a [peptide]-C-terminal (2S)-2-hydroxyglycine + 2 monodehydro-L-ascorbate radical + H2O. The enzyme catalyses a [peptide]-C-terminal (2S)-2-hydroxyglycine = a [peptide]-C-terminal amide + glyoxylate. It carries out the reaction N-dodecanoylglycine + 2 L-ascorbate + O2 = N-dodecanoyl-(2S)-hydroxyglycine + 2 monodehydro-L-ascorbate radical + H2O. It catalyses the reaction N-dodecanoyl-(2S)-hydroxyglycine = dodecanamide + glyoxylate. The catalysed reaction is N-(9Z,12Z,15Z)-octadecatrienoylglycine + 2 L-ascorbate + O2 = N-(9Z,12Z,15Z)-octadecatrienoyl-(2S)-hydroxyglycine + 2 monodehydro-L-ascorbate radical + H2O. The enzyme catalyses N-(9Z,12Z,15Z)-octadecatrienoyl-(2S)-hydroxyglycine = (9Z,12Z,15Z)-octadecatrienamide + glyoxylate. It carries out the reaction N-(9Z-octadecenoyl)glycine + 2 L-ascorbate + O2 = N-(9Z-octadecenoyl)-(2S)-hydroxyglycine + 2 monodehydro-L-ascorbate radical + H2O. It catalyses the reaction N-(9Z-octadecenoyl)-(2S)-hydroxyglycine = (9Z)-octadecenamide + glyoxylate. The catalysed reaction is N-tetradecanoylglycine + 2 L-ascorbate + O2 = N-tetradecanoyl-(2S)-hydroxyglycine + 2 monodehydro-L-ascorbate radical + H2O. The enzyme catalyses N-tetradecanoyl-(2S)-hydroxyglycine = tetradecamide + glyoxylate. It carries out the reaction N-decanoylglycine + 2 L-ascorbate + O2 = N-decanoyl-(2S)-hydroxyglycine + 2 monodehydro-L-ascorbate radical + H2O. It catalyses the reaction N-decanoyl-(2S)-hydroxyglycine = decanamide + glyoxylate. The catalysed reaction is N-octanoylglycine + 2 L-ascorbate + O2 = N-octanoyl-(2S)-hydroxyglycine + 2 monodehydro-L-ascorbate radical + H2O. The enzyme catalyses N-octanoyl-(2S)-hydroxyglycine = octanamide + glyoxylate. PAM activity is inhibited by EDTA, phenylglyoxal and diethyl pyrocarbonate. PAL activity is stimulated by cadmium and inhibited by mercury. Functionally, bifunctional enzyme that catalyzes amidation of the C-terminus of proteins. Alpha-amidation is present at the C-terminus of many endocrine hormones and neuropeptides and is required for their activity. C-terminal amidation also takes place in response to protein fragmentation triggered by oxidative stress, promoting degradation of amidated protein fragments by the proteasome. Alpha-amidation involves two sequential reactions, both of which are catalyzed by separate catalytic domains of the enzyme. The first step, catalyzed by peptidyl alpha-hydroxylating monooxygenase (PHM) domain, is the copper-, ascorbate-, and O2- dependent stereospecific hydroxylation (with S stereochemistry) at the alpha-carbon (C-alpha) of the C-terminal glycine of the peptidylglycine substrate. The second step, catalyzed by the peptidylglycine amidoglycolate lyase (PAL) domain, is the zinc-dependent cleavage of the N-C-alpha bond, producing the alpha-amidated peptide and glyoxylate. Similarly, catalyzes the two-step conversion of an N-fatty acylglycine to a primary fatty acid amide and glyoxylate. The protein is Peptidyl-glycine alpha-amidating monooxygenase of Homo sapiens (Human).